The chain runs to 78 residues: Large ribosomal subunit protein uL23 (78 aa).

Belongs to the universal ribosomal protein uL23 family. Part of the 50S ribosomal subunit. Contacts protein L29.

Functionally, binds to 23S rRNA. One of the proteins that surrounds the polypeptide exit tunnel on the outside of the ribosome. In Nanoarchaeum equitans (strain Kin4-M), this protein is Large ribosomal subunit protein uL23.